Reading from the N-terminus, the 154-residue chain is Fibroblast growth factor 2 (154 aa).

The propeptide occupies 1-9 (MAAGSITSL). A disordered region spans residues 1 to 20 (MAAGSITSLPALPEDGGGAF). Asparagine 35 lines the heparin pocket. A Phosphotyrosine; by TEC modification is found at tyrosine 81. Residue lysine 94 forms a Glycyl lysine isopeptide (Lys-Gly) (interchain with G-Cter in SUMO1) linkage. The heparin-binding stretch occupies residues 127-143 (KRTGQYKLGSKTGPGQK).

Belongs to the heparin-binding growth factors family. As to quaternary structure, monomer. Homodimer. Interacts with FGFR1, FGFR2, FGFR3 and FGFR4. Affinity between fibroblast growth factors (FGFs) and their receptors is increased by heparan sulfate glycosaminoglycans that function as coreceptors. Interacts with CSPG4, FGFBP1 and TEC. Found in a complex with FGFBP1, FGF1 and FGF2. Interacts with FGFBP3. Interacts with integrin ITGAV:ITGB3; the interaction is required for FGF2 signaling. Interacts with SNORC (via the extracellular domain). Interacts with GPC3. In terms of processing, phosphorylation at Tyr-81 regulates FGF2 unconventional secretion. As to expression, found in all tissues examined.

It is found in the secreted. The protein resides in the nucleus. Acts as a ligand for FGFR1, FGFR2, FGFR3 and FGFR4. Also acts as an integrin ligand which is required for FGF2 signaling. Binds to integrin ITGAV:ITGB3. Plays an important role in the regulation of cell survival, cell division, cell differentiation and cell migration. Functions as a potent mitogen in vitro. Can induce angiogenesis. Mediates phosphorylation of ERK1/2 and thereby promotes retinal lens fiber differentiation. In Rattus norvegicus (Rat), this protein is Fibroblast growth factor 2 (Fgf2).